The sequence spans 93 residues: Small ribosomal subunit protein uS19 (93 aa).

Belongs to the universal ribosomal protein uS19 family.

Protein S19 forms a complex with S13 that binds strongly to the 16S ribosomal RNA. This chain is Small ribosomal subunit protein uS19, found in Campylobacter jejuni subsp. jejuni serotype O:6 (strain 81116 / NCTC 11828).